We begin with the raw amino-acid sequence, 419 residues long: Putative competence-damage inducible protein (419 aa).

Belongs to the CinA family.

The protein is Putative competence-damage inducible protein of Streptococcus agalactiae serotype III (strain NEM316).